The chain runs to 527 residues: MISESLLLVFLIVFISASLLKLLFVRENKPKAHLKNPPSPPAIPIIGHLHLLKPLIHHSFRDLSLRYGPLLSLRIGSVKFIVASTPSLAQEFLKTNELTYSSRKMNMAINMVTYHNATFAFAPYDTYWKFMKKLSTTELLGNKTLGHFLPIRTREVHDIIQFLFHKSKAQESVNLTEALLSLSNNVISQMMLSIKSSGTDSQAEQARTLVREVTQIFGEFNVSDFLGFCKNLDLQGFRKRALDIHKRYDALLEKIISDREELRRKSKVDGCEDGDDEKVKDFLDILLDVAEQKECEVQLTRNHVKSLILDYFTAATDTTAISVEWTIAELFNNPKVLKKAQEEVDRVTGNTQLVCEADIPNLPYIHAIIKETMRLHPPIPMIMRKGIEDCVVNGNMIPKGSIVCVNIWAMGRDPNIWKNPLEFKPERFLEGEGSAIDTKGHHFELLPFGSGRRGCPGMPLAMRELPTIIGALIQCFEWKMLGSQGEILDHGRSLISMDERPGLTAPRANDLIGIPVARLNPTPFRQM.

Residues 5 to 25 (SLLLVFLIVFISASLLKLLFV) form a helical membrane-spanning segment. Residue cysteine 455 coordinates heme.

This sequence belongs to the cytochrome P450 family. Requires heme as cofactor.

The protein localises to the membrane. It carries out the reaction a flavanone + reduced [NADPH--hemoprotein reductase] + O2 = a flavone + oxidized [NADPH--hemoprotein reductase] + 2 H2O + H(+). It functions in the pathway secondary metabolite biosynthesis; flavonoid biosynthesis. Its function is as follows. Functions as a flavone synthase II (FNSII) that catalyzes the direct conversion of flavanones to flavones. In vitro, can convert liquiritigenin, naringenin and eriodictyol to 7,4'-dihydroxyflavone, apigenin and luteolin, respectively. This Glycine max (Soybean) protein is Cytochrome P450 93B16.